An 86-amino-acid polypeptide reads, in one-letter code: Large ribosomal subunit protein bL27 (86 aa).

The protein belongs to the bacterial ribosomal protein bL27 family.

The chain is Large ribosomal subunit protein bL27 from Flavobacterium johnsoniae (strain ATCC 17061 / DSM 2064 / JCM 8514 / BCRC 14874 / CCUG 350202 / NBRC 14942 / NCIMB 11054 / UW101) (Cytophaga johnsonae).